The primary structure comprises 248 residues: PF03932 family protein CutC (248 aa).

The protein belongs to the CutC family.

It localises to the cytoplasm. This Citrobacter koseri (strain ATCC BAA-895 / CDC 4225-83 / SGSC4696) protein is PF03932 family protein CutC.